We begin with the raw amino-acid sequence, 238 residues long: Probable transcriptional regulatory protein VIBHAR_07036 (238 aa).

This sequence belongs to the TACO1 family.

It localises to the cytoplasm. The sequence is that of Probable transcriptional regulatory protein VIBHAR_07036 from Vibrio campbellii (strain ATCC BAA-1116).